A 376-amino-acid polypeptide reads, in one-letter code: UDP-N-acetylglucosamine--N-acetylmuramyl-(pentapeptide) pyrophosphoryl-undecaprenol N-acetylglucosamine transferase (376 aa).

UDP-N-acetyl-alpha-D-glucosamine is bound by residues Thr-11–Gly-13, Asn-117, Arg-160, Ser-208, and Gln-310.

This sequence belongs to the glycosyltransferase 28 family. MurG subfamily.

It is found in the cell inner membrane. It carries out the reaction di-trans,octa-cis-undecaprenyl diphospho-N-acetyl-alpha-D-muramoyl-L-alanyl-D-glutamyl-meso-2,6-diaminopimeloyl-D-alanyl-D-alanine + UDP-N-acetyl-alpha-D-glucosamine = di-trans,octa-cis-undecaprenyl diphospho-[N-acetyl-alpha-D-glucosaminyl-(1-&gt;4)]-N-acetyl-alpha-D-muramoyl-L-alanyl-D-glutamyl-meso-2,6-diaminopimeloyl-D-alanyl-D-alanine + UDP + H(+). Its pathway is cell wall biogenesis; peptidoglycan biosynthesis. Cell wall formation. Catalyzes the transfer of a GlcNAc subunit on undecaprenyl-pyrophosphoryl-MurNAc-pentapeptide (lipid intermediate I) to form undecaprenyl-pyrophosphoryl-MurNAc-(pentapeptide)GlcNAc (lipid intermediate II). This is UDP-N-acetylglucosamine--N-acetylmuramyl-(pentapeptide) pyrophosphoryl-undecaprenol N-acetylglucosamine transferase from Rickettsia peacockii (strain Rustic).